The chain runs to 307 residues: F-box protein At5g03100 (307 aa).

One can recognise an F-box domain in the interval 8-54 (VDFISSLPDEILHHILANTPTKLAIRTSVLSKRWKHVWYETPSISIV).

The chain is F-box protein At5g03100 from Arabidopsis thaliana (Mouse-ear cress).